Reading from the N-terminus, the 137-residue chain is Large ribosomal subunit protein uL16 (137 aa).

Residues 1-17 are compositionally biased toward basic residues; it reads MLQPKRTKFRKQQKGRN. A disordered region spans residues 1-24; that stretch reads MLQPKRTKFRKQQKGRNRGLAQSG.

Belongs to the universal ribosomal protein uL16 family. As to quaternary structure, part of the 50S ribosomal subunit.

In terms of biological role, binds 23S rRNA and is also seen to make contacts with the A and possibly P site tRNAs. The polypeptide is Large ribosomal subunit protein uL16 (Dichelobacter nodosus (strain VCS1703A)).